Consider the following 291-residue polypeptide: Pyridoxal 5'-phosphate synthase subunit PdxS (291 aa).

D-ribose 5-phosphate is bound at residue Asp23. Lys80 acts as the Schiff-base intermediate with D-ribose 5-phosphate in catalysis. Gly152 serves as a coordination point for D-ribose 5-phosphate. Arg164 contributes to the D-glyceraldehyde 3-phosphate binding site. Residues Gly213 and 234–235 (GS) contribute to the D-ribose 5-phosphate site.

The protein belongs to the PdxS/SNZ family. In terms of assembly, in the presence of PdxT, forms a dodecamer of heterodimers.

The catalysed reaction is aldehydo-D-ribose 5-phosphate + D-glyceraldehyde 3-phosphate + L-glutamine = pyridoxal 5'-phosphate + L-glutamate + phosphate + 3 H2O + H(+). Its pathway is cofactor biosynthesis; pyridoxal 5'-phosphate biosynthesis. Its function is as follows. Catalyzes the formation of pyridoxal 5'-phosphate from ribose 5-phosphate (RBP), glyceraldehyde 3-phosphate (G3P) and ammonia. The ammonia is provided by the PdxT subunit. Can also use ribulose 5-phosphate and dihydroxyacetone phosphate as substrates, resulting from enzyme-catalyzed isomerization of RBP and G3P, respectively. This Desulfitobacterium hafniense (strain DSM 10664 / DCB-2) protein is Pyridoxal 5'-phosphate synthase subunit PdxS.